The chain runs to 296 residues: Nucleotide-binding protein SPJ_1472 (296 aa).

13-20 contributes to the ATP binding site; the sequence is GMSGAGKT. 63 to 66 contributes to the GTP binding site; it reads DMRS.

Belongs to the RapZ-like family.

Functionally, displays ATPase and GTPase activities. This is Nucleotide-binding protein SPJ_1472 from Streptococcus pneumoniae (strain JJA).